Here is a 209-residue protein sequence, read N- to C-terminus: Putative 3-methyladenine DNA glycosylase (209 aa).

Positions 189–209 are disordered; it reads YISKTQPGPPPKKRKKGLESS. Over residues 199–209 the composition is skewed to basic residues; the sequence is PKKRKKGLESS.

The protein belongs to the DNA glycosylase MPG family.

In Chlorobaculum tepidum (strain ATCC 49652 / DSM 12025 / NBRC 103806 / TLS) (Chlorobium tepidum), this protein is Putative 3-methyladenine DNA glycosylase.